The following is a 399-amino-acid chain: Zinc finger TRAF-type-containing protein 1 (399 aa).

Over residues 1–13 (MSGAEEAGGGGPA) the composition is skewed to gly residues. Residues 1–20 (MSGAEEAGGGGPAAGPAGAV) form a disordered region. The segment at 106 to 151 (CTVCLDLPKASVYQCTNGHLMCAGCFIHLLADARLKEEQATCPNCR) adopts an RING-type; degenerate zinc-finger fold. A TRAF-type zinc finger spans residues 152–210 (CEISKSLCCRNLAVEKAVSELPSECGFCLRQFPRSLLERHQKEECQDRVTQCKYKRIGC).

This sequence belongs to the ZFTRAF1 family. Interacts with LGALS3.

It is found in the cytoplasm. Its subcellular location is the perinuclear region. The chain is Zinc finger TRAF-type-containing protein 1 from Rattus norvegicus (Rat).